Here is an 80-residue protein sequence, read N- to C-terminus: DNA-binding protein S1FA2 (80 aa).

A Nuclear localization signal motif is present at residues 54-59 (PPRKKK). A compositionally biased stretch (basic residues) spans 55–70 (PRKKKPVSKKKMKREK). The segment at 55 to 80 (PRKKKPVSKKKMKREKLKQGVSAPGE) is disordered.

This sequence belongs to the S1FA transcription factor family.

It localises to the nucleus. DNA-binding protein that specifically recognizes a negative element (S1F) within the RPS1 promoter. This is DNA-binding protein S1FA2 (S1FA2) from Oryza sativa subsp. japonica (Rice).